Consider the following 326-residue polypeptide: Putative ribose-phosphate pyrophosphokinase 2 (326 aa).

ATP is bound by residues Asp-43–Glu-45 and Arg-102–Gln-103. His-136 contributes to the Mg(2+) binding site. D-ribose 5-phosphate-binding positions include Asp-225 and Asn-229 to Thr-233.

Belongs to the ribose-phosphate pyrophosphokinase family. Class I subfamily. Homohexamer. Mg(2+) is required as a cofactor.

Its subcellular location is the cytoplasm. The catalysed reaction is D-ribose 5-phosphate + ATP = 5-phospho-alpha-D-ribose 1-diphosphate + AMP + H(+). It participates in metabolic intermediate biosynthesis; 5-phospho-alpha-D-ribose 1-diphosphate biosynthesis; 5-phospho-alpha-D-ribose 1-diphosphate from D-ribose 5-phosphate (route I): step 1/1. Its function is as follows. Involved in the biosynthesis of the central metabolite phospho-alpha-D-ribosyl-1-pyrophosphate (PRPP) via the transfer of pyrophosphoryl group from ATP to 1-hydroxyl of ribose-5-phosphate (Rib-5-P). This Streptococcus pyogenes serotype M3 (strain SSI-1) protein is Putative ribose-phosphate pyrophosphokinase 2.